The chain runs to 291 residues: Ribose-phosphate pyrophosphokinase (291 aa).

ATP-binding positions include 34–36 and 93–94; these read DGE and RQ. Residues His127 and Asp165 each coordinate Mg(2+). Lys188 is a catalytic residue. D-ribose 5-phosphate is bound by residues Arg190, Asp216, and 220–224; that span reads STGGT.

This sequence belongs to the ribose-phosphate pyrophosphokinase family. Class III (archaeal) subfamily. The cofactor is Mg(2+).

The protein resides in the cytoplasm. The enzyme catalyses D-ribose 5-phosphate + ATP = 5-phospho-alpha-D-ribose 1-diphosphate + AMP + H(+). The protein operates within metabolic intermediate biosynthesis; 5-phospho-alpha-D-ribose 1-diphosphate biosynthesis; 5-phospho-alpha-D-ribose 1-diphosphate from D-ribose 5-phosphate (route I): step 1/1. Its function is as follows. Involved in the biosynthesis of the central metabolite phospho-alpha-D-ribosyl-1-pyrophosphate (PRPP) via the transfer of pyrophosphoryl group from ATP to 1-hydroxyl of ribose-5-phosphate (Rib-5-P). This is Ribose-phosphate pyrophosphokinase from Sulfurisphaera tokodaii (strain DSM 16993 / JCM 10545 / NBRC 100140 / 7) (Sulfolobus tokodaii).